Here is a 478-residue protein sequence, read N- to C-terminus: MQQILEHIVGIANDLLWSKLLIVLLLSFGIYFTFRLKFLQVRMLKEMVRVLREGAASRSKNSISPFQAFCISMAARVGTGNITGIAIAIALGGPGAIFWMWIIAIIGSASSFVESTLAQIYKVKDVNGFRGGPAYYMEKGLNKRWMGALFAVLITLSFGIVFNSVQSNTVSLAFENAFGTNRLTLGLILIAVFGTIIFGGVKRIAKLAESIVVVLAVLYIGVAFFVIFSNITQLPGVLALIVKNAFGFDQAAGGALGAALMQGVRRGIFSNEAGMGSAPNAAATATTSHPVKQGLIQAFGVLTDTLVICTSTAFIILFSDAYHTPGLSGIALTQASLSSHVGSWASGFLAILILLFGFCALIGNYYYGETNIGFLNKSKKLIFVYRIGVLAMIVFGCVAKVQLVWDLADLFMGLMVIVNLIAIFLLSKVVFTALKDYTRQKKAGKDPVFYKDVLKNHNGIECWPVSDTKTDTHNKQIS.

Helical transmembrane passes span 14–34 (DLLW…YFTF), 85–105 (IAIA…IIAI), 145–165 (WMGA…FNSV), 185–205 (LGLI…KRIA), 211–231 (IVVV…FSNI), 236–256 (GVLA…GGAL), 298–318 (AFGV…IILF), 342–362 (GSWA…CALI), 381–401 (LIFV…VAKV), and 411–431 (FMGL…KVVF).

Belongs to the alanine or glycine:cation symporter (AGCS) (TC 2.A.25) family.

The protein localises to the cell membrane. Functionally, probably functions as a sodium/glutamine symporter for glutamine uptake. The chain is Probable sodium/glutamine symporter GlnT (glnT) from Bacillus subtilis (strain 168).